A 73-amino-acid chain; its full sequence is Translation initiation factor IF-1 (73 aa).

The region spanning Met1 to Lys73 is the S1-like domain.

Belongs to the IF-1 family. As to quaternary structure, component of the 30S ribosomal translation pre-initiation complex which assembles on the 30S ribosome in the order IF-2 and IF-3, IF-1 and N-formylmethionyl-tRNA(fMet); mRNA recruitment can occur at any time during PIC assembly.

The protein localises to the cytoplasm. Functionally, one of the essential components for the initiation of protein synthesis. Stabilizes the binding of IF-2 and IF-3 on the 30S subunit to which N-formylmethionyl-tRNA(fMet) subsequently binds. Helps modulate mRNA selection, yielding the 30S pre-initiation complex (PIC). Upon addition of the 50S ribosomal subunit IF-1, IF-2 and IF-3 are released leaving the mature 70S translation initiation complex. The polypeptide is Translation initiation factor IF-1 (Salinispora arenicola (strain CNS-205)).